A 194-amino-acid chain; its full sequence is Dephospho-CoA kinase (194 aa).

The DPCK domain occupies Ala-4 to Thr-194. Gly-12–Thr-17 provides a ligand contact to ATP.

Belongs to the CoaE family.

The protein resides in the cytoplasm. The catalysed reaction is 3'-dephospho-CoA + ATP = ADP + CoA + H(+). It participates in cofactor biosynthesis; coenzyme A biosynthesis; CoA from (R)-pantothenate: step 5/5. Catalyzes the phosphorylation of the 3'-hydroxyl group of dephosphocoenzyme A to form coenzyme A. The protein is Dephospho-CoA kinase of Jannaschia sp. (strain CCS1).